A 421-amino-acid polypeptide reads, in one-letter code: Tryptophan synthase beta chain (421 aa).

An N6-(pyridoxal phosphate)lysine modification is found at K110.

Belongs to the TrpB family. As to quaternary structure, tetramer of two alpha and two beta chains. It depends on pyridoxal 5'-phosphate as a cofactor.

It carries out the reaction (1S,2R)-1-C-(indol-3-yl)glycerol 3-phosphate + L-serine = D-glyceraldehyde 3-phosphate + L-tryptophan + H2O. Its pathway is amino-acid biosynthesis; L-tryptophan biosynthesis; L-tryptophan from chorismate: step 5/5. The beta subunit is responsible for the synthesis of L-tryptophan from indole and L-serine. The chain is Tryptophan synthase beta chain (trpB) from Mycobacterium intracellulare.